A 90-amino-acid chain; its full sequence is Large ribosomal subunit protein uL23c (90 aa).

Belongs to the universal ribosomal protein uL23 family. Part of the 50S ribosomal subunit.

The protein localises to the plastid. The protein resides in the chloroplast. Functionally, binds to 23S rRNA. The protein is Large ribosomal subunit protein uL23c (rpl23) of Oltmannsiellopsis viridis (Marine flagellate).